Consider the following 307-residue polypeptide: MPVTQGSGALPARRIVFVHAHPDDETIATGATMACYAADPDTQVVLVTCTLGEMGEVLVPELTNLRADRADQLGGYRIGELEQACTELGVTDYRFLGGAGRWRDSGMLDSPANDDPRCFWRANMDDASEALVRIVREVRPQVIVTYDAIGDYGHPDHIRAHDVTVRAFADAADPDFAPDAGPTWQVSKLYETALSHSAVESAVDRIWRSDLAKTVPEGITMPSDMLLSVPDTKVTTTIEAPGFFAAKIAAMRAHRSQMTVDGFFFALVDGNGRSAKATENFVLARGAVGPGSGSGVETDLFDGVATR.

Zn(2+) contacts are provided by His21, Asp24, and His157.

Belongs to the MshB deacetylase family. Requires Zn(2+) as cofactor.

The catalysed reaction is 1D-myo-inositol 2-acetamido-2-deoxy-alpha-D-glucopyranoside + H2O = 1D-myo-inositol 2-amino-2-deoxy-alpha-D-glucopyranoside + acetate. Its function is as follows. Catalyzes the deacetylation of 1D-myo-inositol 2-acetamido-2-deoxy-alpha-D-glucopyranoside (GlcNAc-Ins) in the mycothiol biosynthesis pathway. In Frankia casuarinae (strain DSM 45818 / CECT 9043 / HFP020203 / CcI3), this protein is 1D-myo-inositol 2-acetamido-2-deoxy-alpha-D-glucopyranoside deacetylase 1.